Reading from the N-terminus, the 346-residue chain is Beta-hexosaminidase (346 aa).

Substrate is bound by residues Asp-62, Arg-70, Arg-134, and 164-165; that span reads KH. His-177 acts as the Proton donor/acceptor in catalysis. The active-site Nucleophile is the Asp-249.

This sequence belongs to the glycosyl hydrolase 3 family. NagZ subfamily.

Its subcellular location is the cytoplasm. The catalysed reaction is Hydrolysis of terminal non-reducing N-acetyl-D-hexosamine residues in N-acetyl-beta-D-hexosaminides.. The protein operates within cell wall biogenesis; peptidoglycan recycling. In terms of biological role, plays a role in peptidoglycan recycling by cleaving the terminal beta-1,4-linked N-acetylglucosamine (GlcNAc) from peptide-linked peptidoglycan fragments, giving rise to free GlcNAc, anhydro-N-acetylmuramic acid and anhydro-N-acetylmuramic acid-linked peptides. The chain is Beta-hexosaminidase from Actinobacillus succinogenes (strain ATCC 55618 / DSM 22257 / CCUG 43843 / 130Z).